The primary structure comprises 227 residues: Octanoyltransferase (227 aa).

The 188-residue stretch at 35 to 222 folds into the BPL/LPL catalytic domain; sequence EAYENRIIMC…ELGRLLNEKK (188 aa). Substrate is bound by residues 80 to 87, 152 to 154, and 165 to 167; these read RGGDITYH, AIG, and GLA. Residue Cys-183 is the Acyl-thioester intermediate of the active site.

This sequence belongs to the LipB family.

It localises to the cytoplasm. It carries out the reaction octanoyl-[ACP] + L-lysyl-[protein] = N(6)-octanoyl-L-lysyl-[protein] + holo-[ACP] + H(+). It functions in the pathway protein modification; protein lipoylation via endogenous pathway; protein N(6)-(lipoyl)lysine from octanoyl-[acyl-carrier-protein]: step 1/2. Catalyzes the transfer of endogenously produced octanoic acid from octanoyl-acyl-carrier-protein onto the lipoyl domains of lipoate-dependent enzymes. Lipoyl-ACP can also act as a substrate although octanoyl-ACP is likely to be the physiological substrate. This chain is Octanoyltransferase, found in Bacteroides thetaiotaomicron (strain ATCC 29148 / DSM 2079 / JCM 5827 / CCUG 10774 / NCTC 10582 / VPI-5482 / E50).